Consider the following 185-residue polypeptide: Peptidyl-tRNA hydrolase (185 aa).

TRNA is bound at residue tyrosine 14. Residue histidine 19 is the Proton acceptor of the active site. 3 residues coordinate tRNA: phenylalanine 64, asparagine 66, and asparagine 112.

This sequence belongs to the PTH family. Monomer.

The protein resides in the cytoplasm. The enzyme catalyses an N-acyl-L-alpha-aminoacyl-tRNA + H2O = an N-acyl-L-amino acid + a tRNA + H(+). In terms of biological role, hydrolyzes ribosome-free peptidyl-tRNAs (with 1 or more amino acids incorporated), which drop off the ribosome during protein synthesis, or as a result of ribosome stalling. Catalyzes the release of premature peptidyl moieties from peptidyl-tRNA molecules trapped in stalled 50S ribosomal subunits, and thus maintains levels of free tRNAs and 50S ribosomes. In Alkaliphilus metalliredigens (strain QYMF), this protein is Peptidyl-tRNA hydrolase.